The sequence spans 345 residues: Phosphoribosylformylglycinamidine cyclo-ligase (345 aa).

It belongs to the AIR synthase family. Homodimer.

Its subcellular location is the cytoplasm. The catalysed reaction is 2-formamido-N(1)-(5-O-phospho-beta-D-ribosyl)acetamidine + ATP = 5-amino-1-(5-phospho-beta-D-ribosyl)imidazole + ADP + phosphate + H(+). Its pathway is purine metabolism; IMP biosynthesis via de novo pathway; 5-amino-1-(5-phospho-D-ribosyl)imidazole from N(2)-formyl-N(1)-(5-phospho-D-ribosyl)glycinamide: step 2/2. The polypeptide is Phosphoribosylformylglycinamidine cyclo-ligase (Escherichia coli O157:H7).